Consider the following 893-residue polypeptide: Alanine--tRNA ligase (893 aa).

Zn(2+) is bound by residues histidine 575, histidine 579, cysteine 677, and histidine 681.

It belongs to the class-II aminoacyl-tRNA synthetase family. Requires Zn(2+) as cofactor.

It localises to the cytoplasm. It catalyses the reaction tRNA(Ala) + L-alanine + ATP = L-alanyl-tRNA(Ala) + AMP + diphosphate. Its function is as follows. Catalyzes the attachment of alanine to tRNA(Ala) in a two-step reaction: alanine is first activated by ATP to form Ala-AMP and then transferred to the acceptor end of tRNA(Ala). Also edits incorrectly charged Ser-tRNA(Ala) and Gly-tRNA(Ala) via its editing domain. The protein is Alanine--tRNA ligase of Synechococcus sp. (strain CC9311).